The chain runs to 215 residues: Probable phosphoglycerate mutase GpmB (215 aa).

Substrate is bound by residues 8 to 15 (RHGETQWN), 21 to 22 (QG), R58, R60, 82 to 85 (ELDM), 104 to 105 (RR), and 151 to 152 (GI). The Tele-phosphohistidine intermediate role is filled by H9. The active-site Proton donor/acceptor is E82.

The protein belongs to the phosphoglycerate mutase family. GpmB subfamily.

The enzyme catalyses (2R)-2-phosphoglycerate = (2R)-3-phosphoglycerate. It participates in carbohydrate degradation; glycolysis; pyruvate from D-glyceraldehyde 3-phosphate: step 3/5. This chain is Probable phosphoglycerate mutase GpmB, found in Citrobacter koseri (strain ATCC BAA-895 / CDC 4225-83 / SGSC4696).